Here is a 1104-residue protein sequence, read N- to C-terminus: MATPVRDETRNVIDDNISARIQSKVKTNDTVRQTPSSLRKVSIKDEQVKQYQRNLNRFKTILNGLKAEEEKLSETDDIQMLAEKLLKLGETIDKVENRIVDLVEKIQLLETNENNNILHEHIDATGTYYLFDTLTSTNKRFYPKDCVFDYRTNNVENIPILLNNFKKFIKKYQFDDVFENDIIEIDPRENEILCKIIKEGLGESLDIMNTNTTDIFRIIDGLKNKYRSLHGRDVRIRAWEKVLVDTTCRNSALLMNKLQKLVLMEKWIFSKCCQDCPNLKDYLQEAIMGTLHESLRNSVKQRLYNIPHNVGINHEEFLINTVIETVIDLSPIADDQIENSCMYCKSVFHCSINCKKKPNRELRPDSTNFSKTYYLQGAQRQQQLKSSAKEQKSWNKTQKKSNKVYNSKKLVIIDTGSGVNITNDKTLLHNYEDSNRSTRFFGIGKNSSVSVKGYGYIKIKNGHNNTDNKCLLTYYVPEEESTIISCYDLAKKTKMVLSRKYTRLGNKIIKIKTKIVNGVIHVKMNELIERPSDDSKINAIKPTSSPGFKLNKRSITLEDAHKRMGHTGIQQIENSIKHNHYEESLDLIKEPNEFWCQTCKISKATKRNHYTGSMNNHSTDHEPGSSWCMDIFGPVSSSNADTKRYMLIMVDNNTRYCMTSTHFNKNAETILAQIRKNIQYVETQFDRKVREINSDRGTEFTNDQIEEYFISKGIHHILTSTQDHAANGRAERYIRTIVTDATTLLRQSNLRVKFWEYAVTSATNIRNCLEHKSTGKLPLKAISRQPVTVRLMSFLPFGEKGIIWNHNHKKLKPSGLPSIILCKDPNSYGYKFFIPSKNKIVTSDNYTIPNYTMDGRVRNTQNIYKSHQFSSHNDNEEDQIETVTNLCEALENYEDDNKPITRLEDLFTEEELSQIDSNAKYPSPSNNLEGDLDYVFSDVEESGDYDVESELSTTNTSISTDKNKILSNKDFNSELASTEISISEIDKKGLINTSHIDEDKYDEKVHRIPSIIQEKLVGSKNTIKINDENRISDRIRSKNIGSILNTGLSRCVDITDESITNKDESMHNAKPELIQEQFNKTNHETSFPKEGSIGTKCKIPKYRQ.

Residues 48 to 112 (VKQYQRNLNR…VEKIQLLETN (65 aa)) are a coiled coil. The interval 381–501 (QQQLKSSAKE…KTKMVLSRKY (121 aa)) is ty4 protease. The active-site For protease activity; shared with dimeric partner is aspartate 414. Residues 539–599 (AIKPTSSPGF…EPNEFWCQTC (61 aa)) form an integrase-type zinc finger-like region. Residues 619-786 (TDHEPGSSWC…LPLKAISRQP (168 aa)) form the Integrase catalytic domain. Aspartate 630 and aspartate 695 together coordinate Mg(2+).

As to quaternary structure, the protease is a homodimer, whose active site consists of two apposed aspartic acid residues. Post-translationally, proteolytically processed into capsid protein (CA), Ty4 protease (PR), integrase (IN) and reverse transcriptase/ribonuclease H (RT) proteins. Initially, virus-like particles (VLPs) are composed of the structural unprocessed proteins Gag and Gag-Pol, and also contain the host initiator methionine tRNA (tRNA(i)-Met) which serves as a primer for minus-strand DNA synthesis, and a dimer of genomic Ty RNA. Processing of the polyproteins occurs within the particle and proceeds by an ordered pathway, called maturation. First, the protease (PR) is released by autocatalytic cleavage of the Gag-Pol polyprotein, and this cleavage is a prerequisite for subsequent processing at the remaining sites to release the mature structural and catalytic proteins. Maturation takes place prior to the RT reaction and is required to produce transposition-competent VLPs.

It is found in the cytoplasm. It localises to the nucleus. It catalyses the reaction DNA(n) + a 2'-deoxyribonucleoside 5'-triphosphate = DNA(n+1) + diphosphate. It carries out the reaction Endonucleolytic cleavage to 5'-phosphomonoester.. Functionally, capsid protein (CA) is the structural component of the virus-like particle (VLP), forming the shell that encapsulates the retrotransposons dimeric RNA genome. The aspartyl protease (PR) mediates the proteolytic cleavages of the Gag and Gag-Pol polyproteins after assembly of the VLP. In terms of biological role, reverse transcriptase/ribonuclease H (RT) is a multifunctional enzyme that catalyzes the conversion of the retro-elements RNA genome into dsDNA within the VLP. The enzyme displays a DNA polymerase activity that can copy either DNA or RNA templates, and a ribonuclease H (RNase H) activity that cleaves the RNA strand of RNA-DNA heteroduplexes during plus-strand synthesis and hydrolyzes RNA primers. The conversion leads to a linear dsDNA copy of the retrotransposon that includes long terminal repeats (LTRs) at both ends. Its function is as follows. Integrase (IN) targets the VLP to the nucleus, where a subparticle preintegration complex (PIC) containing at least integrase and the newly synthesized dsDNA copy of the retrotransposon must transit the nuclear membrane. Once in the nucleus, integrase performs the integration of the dsDNA into the host genome. The chain is Transposon Ty4-P Gag-Pol polyprotein (TY4B-P) from Saccharomyces cerevisiae (strain ATCC 204508 / S288c) (Baker's yeast).